Consider the following 412-residue polypeptide: Multifunctional CCA protein (412 aa).

2 residues coordinate ATP: Gly-8 and Arg-11. CTP-binding residues include Gly-8 and Arg-11. Residues Glu-21 and Asp-23 each contribute to the Mg(2+) site. 3 residues coordinate ATP: Arg-91, Arg-137, and Arg-140. Arg-91, Arg-137, and Arg-140 together coordinate CTP. The 102-residue stretch at 228–329 (CGIHTLMSLQ…WRLLQRLDVL (102 aa)) folds into the HD domain.

The protein belongs to the tRNA nucleotidyltransferase/poly(A) polymerase family. Bacterial CCA-adding enzyme type 1 subfamily. As to quaternary structure, monomer. Can also form homodimers and oligomers. Requires Mg(2+) as cofactor. Ni(2+) is required as a cofactor.

The enzyme catalyses a tRNA precursor + 2 CTP + ATP = a tRNA with a 3' CCA end + 3 diphosphate. It catalyses the reaction a tRNA with a 3' CCA end + 2 CTP + ATP = a tRNA with a 3' CCACCA end + 3 diphosphate. Catalyzes the addition and repair of the essential 3'-terminal CCA sequence in tRNAs without using a nucleic acid template. Adds these three nucleotides in the order of C, C, and A to the tRNA nucleotide-73, using CTP and ATP as substrates and producing inorganic pyrophosphate. tRNA 3'-terminal CCA addition is required both for tRNA processing and repair. Also involved in tRNA surveillance by mediating tandem CCA addition to generate a CCACCA at the 3' terminus of unstable tRNAs. While stable tRNAs receive only 3'-terminal CCA, unstable tRNAs are marked with CCACCA and rapidly degraded. The sequence is that of Multifunctional CCA protein from Acinetobacter baumannii (strain ATCC 17978 / DSM 105126 / CIP 53.77 / LMG 1025 / NCDC KC755 / 5377).